A 75-amino-acid chain; its full sequence is Penaeidin-3l (75 aa).

Residues 1–19 (MRLVVCLVFLASFALVCQG) form the signal peptide. Q20 bears the Pyrrolidone carboxylic acid mark. 3 disulfide bridges follow: C44–C59, C48–C66, and C60–C67. At S74 the chain carries Serine amide.

This sequence belongs to the penaeidin family.

The protein localises to the cytoplasmic granule. Functionally, antibacterial and antifungal activity. Presents chitin-binding activity. This is Penaeidin-3l from Penaeus setiferus (Atlantic white shrimp).